The chain runs to 335 residues: Anthranilate phosphoribosyltransferase (335 aa).

5-phospho-alpha-D-ribose 1-diphosphate-binding positions include glycine 79, 82 to 83 (GD), threonine 87, 89 to 92 (NIST), 107 to 115 (KHCNQGVSS), and serine 119. Residue glycine 79 coordinates anthranilate. Residue serine 91 participates in Mg(2+) binding. An anthranilate-binding site is contributed by asparagine 110. Position 165 (arginine 165) interacts with anthranilate. Mg(2+) is bound by residues aspartate 223 and glutamate 224.

The protein belongs to the anthranilate phosphoribosyltransferase family. As to quaternary structure, homodimer. Mg(2+) serves as cofactor.

It catalyses the reaction N-(5-phospho-beta-D-ribosyl)anthranilate + diphosphate = 5-phospho-alpha-D-ribose 1-diphosphate + anthranilate. It functions in the pathway amino-acid biosynthesis; L-tryptophan biosynthesis; L-tryptophan from chorismate: step 2/5. Its function is as follows. Catalyzes the transfer of the phosphoribosyl group of 5-phosphorylribose-1-pyrophosphate (PRPP) to anthranilate to yield N-(5'-phosphoribosyl)-anthranilate (PRA). The polypeptide is Anthranilate phosphoribosyltransferase (Buchnera aphidicola subsp. Diuraphis noxia).